The primary structure comprises 75 residues: Large ribosomal subunit protein bL31 (75 aa).

Belongs to the bacterial ribosomal protein bL31 family. Type A subfamily. In terms of assembly, part of the 50S ribosomal subunit.

Binds the 23S rRNA. This Zymomonas mobilis subsp. mobilis (strain ATCC 31821 / ZM4 / CP4) protein is Large ribosomal subunit protein bL31.